Here is a 79-residue protein sequence, read N- to C-terminus: UPF0154 protein SUB0399 (79 aa).

The helical transmembrane segment at 4-24 (AIWILLIVLALIGGLFGGVFI) threads the bilayer.

This sequence belongs to the UPF0154 family.

It localises to the cell membrane. In Streptococcus uberis (strain ATCC BAA-854 / 0140J), this protein is UPF0154 protein SUB0399.